The chain runs to 238 residues: Chromosome partition protein MukE (238 aa).

Residues 206 to 238 form a disordered region; it reads EESSQSSFDLDENEKLSDISAEEQHELELEGDA. Over residues 218-238 the composition is skewed to basic and acidic residues; that stretch reads NEKLSDISAEEQHELELEGDA.

It belongs to the MukE family. Interacts, and probably forms a ternary complex, with MukF and MukB. The complex formation is stimulated by calcium or magnesium.

It is found in the cytoplasm. The protein localises to the nucleoid. Functionally, involved in chromosome condensation, segregation and cell cycle progression. May participate in facilitating chromosome segregation by condensation DNA from both sides of a centrally located replisome during cell division. Probably acts via its interaction with MukB and MukF. This Aliivibrio salmonicida (strain LFI1238) (Vibrio salmonicida (strain LFI1238)) protein is Chromosome partition protein MukE.